A 64-amino-acid polypeptide reads, in one-letter code: MRLHHLLLVLLFLVLSAGSGFTQVVRNPQSCRWNMGVCIPISCPGNMRQIGTCFGPRVPCCRRW.

The first 22 residues, 1-22, serve as a signal peptide directing secretion; the sequence is MRLHHLLLVLLFLVLSAGSGFT. Residue Gln23 is modified to Pyrrolidone carboxylic acid. Intrachain disulfides connect Cys31–Cys60, Cys38–Cys53, and Cys43–Cys61.

It belongs to the beta-defensin family. As to expression, neutrophilic granules. Alveolar macrophages.

The protein resides in the secreted. Functionally, has bactericidal activity. Active against E.coli ML35 but not against S.aureus 502A. The polypeptide is Beta-defensin 5 (DEFB5) (Bos taurus (Bovine)).